Reading from the N-terminus, the 255-residue chain is Hydroxyacylglutathione hydrolase (255 aa).

The Zn(2+) site is built by His56, His58, Asp60, His61, His114, Asp133, and His171.

The protein belongs to the metallo-beta-lactamase superfamily. Glyoxalase II family. As to quaternary structure, monomer. Zn(2+) is required as a cofactor.

The enzyme catalyses an S-(2-hydroxyacyl)glutathione + H2O = a 2-hydroxy carboxylate + glutathione + H(+). Its pathway is secondary metabolite metabolism; methylglyoxal degradation; (R)-lactate from methylglyoxal: step 2/2. Its function is as follows. Thiolesterase that catalyzes the hydrolysis of S-D-lactoyl-glutathione to form glutathione and D-lactic acid. This is Hydroxyacylglutathione hydrolase from Bradyrhizobium sp. (strain ORS 278).